We begin with the raw amino-acid sequence, 761 residues long: Nitrogen fixation protein FixI (761 aa).

Residues 1–120 (MSCCTMDAES…SAPESDKTRN (120 aa)) lie on the Cytoplasmic side of the membrane. Residues 36-106 (RQLDLSVSDV…EINSAGYRAH (71 aa)) form the HMA domain. A metal cation-binding residues include cysteine 47 and cysteine 50. The helical transmembrane segment at 121–142 (QLLLAIGVSGFAAPNIMLLSVS) threads the bilayer. Residues 143–155 (VWSGADAATRDMF) are Extracellular-facing. Residues 156-177 (HWISAMIAAPALVYAGRFFFKS) traverse the membrane as a helical segment. At 178–184 (AWNALRH) the chain is on the cytoplasmic side. A helical transmembrane segment spans residues 185–205 (GRTNMDVPISVTVSLSYAVSL). Topologically, residues 206–217 (WETVHHGEHAWF) are extracellular. The chain crosses the membrane as a helical span at residues 218-238 (DASVSLLFFLLIGRTLDHIMR). At 239–367 (EKARAAINGL…RARYRRIADR (129 aa)) the chain is on the cytoplasmic side. The chain crosses the membrane as a helical span at residues 368–390 (AATLYSPVVHLLALVSFLAWGFL). Topologically, residues 391–395 (GGDWK) are extracellular. The chain crosses the membrane as a helical span at residues 396–415 (QAMLVAVAVLIITCPCALGL). Residues 416–691 (AVPVVQVVAA…AVARRSASLI (276 aa)) lie on the Cytoplasmic side of the membrane. The 4-aspartylphosphate intermediate role is filled by aspartate 453. Mg(2+) is bound by residues aspartate 637 and aspartate 641. The chain crosses the membrane as a helical span at residues 692-711 (RQNFALAIGYNVLAVPIAIA). Topologically, residues 712–716 (GLATP) are extracellular. A helical transmembrane segment spans residues 717-735 (LIAAVAMSTSSIIVVTNAL). Residues 736-761 (RLNGFGKRPDMHIRRGIGRSAEVKAA) lie on the Cytoplasmic side of the membrane.

Belongs to the cation transport ATPase (P-type) (TC 3.A.3) family. Type IB subfamily.

It localises to the cell membrane. The catalysed reaction is ATP + H2O = ADP + phosphate + H(+). Functionally, fixI is a pump of a specific cation involved in symbiotic nitrogen fixation. The four proteins FixG, FixH, FixI, and FixS may participate in a membrane-bound complex coupling the FixI cation pump with a redox process catalyzed by FixG. The polypeptide is Nitrogen fixation protein FixI (fixI) (Rhizobium leguminosarum bv. viciae).